The sequence spans 345 residues: Probable deoxyhypusine synthase 2 (345 aa).

K292 functions as the Nucleophile in the catalytic mechanism.

It belongs to the deoxyhypusine synthase family. The cofactor is NAD(+).

It carries out the reaction [eIF5A protein]-L-lysine + spermidine = [eIF5A protein]-deoxyhypusine + propane-1,3-diamine. It functions in the pathway protein modification; eIF5A hypusination. Functionally, catalyzes the NAD-dependent oxidative cleavage of spermidine and the subsequent transfer of the butylamine moiety of spermidine to the epsilon-amino group of a specific lysine residue of the eIF-5A precursor protein to form the intermediate deoxyhypusine residue. The polypeptide is Probable deoxyhypusine synthase 2 (dys2) (Methanosarcina acetivorans (strain ATCC 35395 / DSM 2834 / JCM 12185 / C2A)).